The chain runs to 210 residues: MAKLLYVTCNLKPTEFSCSLSVGKKFLDEYLRQNPADEVYFLDLYRDNIQRIDADVLSGWGKMRNGESFASLTTDEQRKVGHIWKHADQFIAADKYVFVTPMFNLGFPAELKMYIDAVCVVGKTFAYTPTGPVGLLKDQGRKCLHIHSSGGFHFGKEEDHSVPYLKSIMGFMGIEDFESIVVEGVDAIPDRAESFKGAAVEKARGVASQF.

FMN contacts are provided by residues 17–19 and 148–151; these read SCS and SSGG.

Belongs to the azoreductase type 1 family. In terms of assembly, homodimer. It depends on FMN as a cofactor.

It catalyses the reaction 2 a quinone + NADH + H(+) = 2 a 1,4-benzosemiquinone + NAD(+). It carries out the reaction N,N-dimethyl-1,4-phenylenediamine + anthranilate + 2 NAD(+) = 2-(4-dimethylaminophenyl)diazenylbenzoate + 2 NADH + 2 H(+). Quinone reductase that provides resistance to thiol-specific stress caused by electrophilic quinones. Functionally, also exhibits azoreductase activity. Catalyzes the reductive cleavage of the azo bond in aromatic azo compounds to the corresponding amines. In Geotalea uraniireducens (strain Rf4) (Geobacter uraniireducens), this protein is FMN-dependent NADH:quinone oxidoreductase.